The primary structure comprises 397 residues: Tryptophan synthase beta chain (397 aa).

Lys90 bears the N6-(pyridoxal phosphate)lysine mark.

It belongs to the TrpB family. In terms of assembly, tetramer of two alpha and two beta chains. Pyridoxal 5'-phosphate serves as cofactor.

It carries out the reaction (1S,2R)-1-C-(indol-3-yl)glycerol 3-phosphate + L-serine = D-glyceraldehyde 3-phosphate + L-tryptophan + H2O. The protein operates within amino-acid biosynthesis; L-tryptophan biosynthesis; L-tryptophan from chorismate: step 5/5. Its function is as follows. The beta subunit is responsible for the synthesis of L-tryptophan from indole and L-serine. In Nitrosomonas europaea (strain ATCC 19718 / CIP 103999 / KCTC 2705 / NBRC 14298), this protein is Tryptophan synthase beta chain.